We begin with the raw amino-acid sequence, 580 residues long: Arginine--tRNA ligase (580 aa).

A 'HIGH' region motif is present at residues 127–137 (PNLAKEMHVGH).

This sequence belongs to the class-I aminoacyl-tRNA synthetase family. In terms of assembly, monomer.

The protein localises to the cytoplasm. It catalyses the reaction tRNA(Arg) + L-arginine + ATP = L-arginyl-tRNA(Arg) + AMP + diphosphate. This is Arginine--tRNA ligase from Idiomarina loihiensis (strain ATCC BAA-735 / DSM 15497 / L2-TR).